The sequence spans 218 residues: Large ribosomal subunit protein uL3 (218 aa).

The segment at 126–170 (HGFSRGPMSHGSKNHREPGSTGAGTTPGRIYPGKRMAGRYGGKKR) is disordered.

It belongs to the universal ribosomal protein uL3 family. As to quaternary structure, part of the 50S ribosomal subunit. Forms a cluster with proteins L14 and L19.

Functionally, one of the primary rRNA binding proteins, it binds directly near the 3'-end of the 23S rRNA, where it nucleates assembly of the 50S subunit. The protein is Large ribosomal subunit protein uL3 of Prochlorococcus marinus (strain MIT 9313).